The primary structure comprises 264 residues: 5'-nucleotidase SurE (264 aa).

4 residues coordinate a divalent metal cation: Asp-10, Asp-11, Ser-43, and Asn-99.

It belongs to the SurE nucleotidase family. A divalent metal cation serves as cofactor.

The protein resides in the cytoplasm. The enzyme catalyses a ribonucleoside 5'-phosphate + H2O = a ribonucleoside + phosphate. Its function is as follows. Nucleotidase that shows phosphatase activity on nucleoside 5'-monophosphates. This Methanococcus maripaludis (strain C7 / ATCC BAA-1331) protein is 5'-nucleotidase SurE.